Reading from the N-terminus, the 636-residue chain is 1-phosphatidylinositol 4,5-bisphosphate phosphodiesterase zeta-1 (636 aa).

In terms of domain architecture, EF-hand spans 35–70 (CNTIHVKCIFKDNDRLKQGRITIEEFRTIYRIIAHR). In terms of domain architecture, PI-PLC X-box spans 155–299 (QDMTHPLSDY…LKFKILVRNK (145 aa)). Residues His-170 and His-215 contribute to the active site. Residues 311-338 (KGFDKHGQVQECEEEEEAEQEEEENEVR) are disordered. The stretch at 318 to 345 (QVQECEEEEEAEQEEEENEVRDSEILDI) forms a coiled coil. Residues 321 to 336 (ECEEEEEAEQEEEENE) show a composition bias toward acidic residues. Positions 375-491 (LSDLVIYTKV…GYILKPHFLR (117 aa)) constitute a PI-PLC Y-box domain. In terms of domain architecture, C2 spans 491 to 617 (RDGKSIFNPN…KGYRRVPLFS (127 aa)).

In terms of assembly, interacts via its C2 domain with PtdIns(3)P and, to a lesser extent, PtdIns(5)P in vitro. The cofactor is Ca(2+). As to expression, expressed specifically in testis.

The protein resides in the nucleus. The protein localises to the cytoplasm. It is found in the perinuclear region. The enzyme catalyses a 1,2-diacyl-sn-glycero-3-phospho-(1D-myo-inositol-4,5-bisphosphate) + H2O = 1D-myo-inositol 1,4,5-trisphosphate + a 1,2-diacyl-sn-glycerol + H(+). Its function is as follows. The production of the second messenger molecules diacylglycerol (DAG) and inositol 1,4,5-trisphosphate (IP3) is mediated by activated phosphatidylinositol-specific phospholipase C enzymes. In vitro, hydrolyzes PtdIns(4,5)P2 in a Ca(2+)-dependent manner. Triggers intracellular Ca(2+) oscillations in oocytes solely during M phase and is involved in inducing oocyte activation and initiating embryonic development up to the blastocyst stage. Is therefore a strong candidate for the egg-activating soluble sperm factor that is transferred from the sperm into the egg cytoplasm following gamete membrane fusion. May exert an inhibitory effect on phospholipase-C-coupled processes that depend on calcium ions and protein kinase C, including CFTR trafficking and function. The polypeptide is 1-phosphatidylinositol 4,5-bisphosphate phosphodiesterase zeta-1 (Sus scrofa (Pig)).